We begin with the raw amino-acid sequence, 133 residues long: Holo-[acyl-carrier-protein] synthase (133 aa).

Mg(2+)-binding residues include Asp8 and Glu57.

Belongs to the P-Pant transferase superfamily. AcpS family. Mg(2+) is required as a cofactor.

Its subcellular location is the cytoplasm. The catalysed reaction is apo-[ACP] + CoA = holo-[ACP] + adenosine 3',5'-bisphosphate + H(+). In terms of biological role, transfers the 4'-phosphopantetheine moiety from coenzyme A to a Ser of acyl-carrier-protein. The polypeptide is Holo-[acyl-carrier-protein] synthase (Bartonella quintana (strain Toulouse) (Rochalimaea quintana)).